The sequence spans 355 residues: Replication-associated protein (355 aa).

Positions 11–114 constitute a CRESS-DNA virus Rep endonuclease domain; sequence LHRTANTFLT…PLALFERGTF (104 aa). The RCR-1 signature appears at 18 to 21; the sequence is FLTY. 3 residues coordinate a divalent metal cation: E52, H60, and H62. The short motif at 60-62 is the RCR-2 element; sequence HLH. Y100 serves as the catalytic For DNA cleavage activity. An RCR-3 motif is present at residues 100 to 103; it reads YILK. Residue E104 participates in a divalent metal cation binding. An oligomerization region spans residues 175 to 187; the sequence is SANKLFPDIQEEF. 229–236 is an ATP binding site; the sequence is GPTRTGKS. The segment at 252-270 is transactivation; that stretch reads VDWSSYNEDAIYNIVDDIP. The Nuclear localization signal signature appears at 292 to 303; the sequence is KYGKKKKVQMKS.

Belongs to the geminiviridae Rep protein family. Homooligomer. Rep binds to repeated DNA motifs (iterons). Forms the O-complex, which is a Rep-DNA complex involved in the initiation of RCR. Part of the C- and V-complexes which are RepA-Rep-DNA complexes involved in the c-sense and v-sense transcription. Requires Mg(2+) as cofactor. Mn(2+) serves as cofactor.

It is found in the host nucleus. Functionally, essential for the replication of viral ssDNA. The closed circular ssDNA genome is first converted to a superhelical dsDNA. Rep binds a specific region at the genome origin of replication. It introduces an endonucleolytic nick within the conserved sequence 5'-TAATATTAC-3' in the intergenic region of the genome present in all geminiviruses, thereby initiating the rolling circle replication (RCR). Following cleavage, binds covalently to the 5'-phosphate of DNA as a tyrosyl ester. The cleavage gives rise to a free 3'-OH that serves as a primer for the cellular DNA polymerase. The polymerase synthesizes the (+) strand DNA by rolling circle mechanism. After one round of replication, a Rep-catalyzed nucleotidyl transfer reaction releases a circular single-stranded virus genome, thereby terminating the replication. Displays origin-specific DNA cleavage, nucleotidyl transferase, ATPase and helicase activities. Acts as an inhibitor of C-sense gene transcription. The chain is Replication-associated protein from Maize streak virus genotype D (isolate Raw) (MSV).